The chain runs to 422 residues: MSQKTERPVLSGQRIKTRKRDEREKYDPTGFRDAVIAGLEKTEGDLEQISKYLDSAGNKLDYRRYGEVLFDILIAGGLLVPGGSISQDGEKPRTSYCIFDAPESMESMRNHEQVFVKLIRRYKYLEKMFEEEMGKVLLFVKGFTPSERIKLARMTALWLVNGSVPPNVLLVLNNEHLIKDGIALEFLLELFQTFKQEKGIAYLIQALKKGGLESKLMDFFPPNKRTEEYFKQVFLDKELNEIVKLHKAQASQEAKRELQQALIDDINDEKPYNEITSDIKDFSQRTNIPDHEIIVIIWSTIMSLGEWNKKEELVTDQAVRHLKNYCPLLQAFASTDRSELALILKVQEFCYENMNFMKAFQKIILLFYKTEVLSEEIILRWYKEGHSNKGKMHFLEQMRKFVEWLQSAEEESESEDEQKNGE.

The interval 1-26 (MSQKTERPVLSGQRIKTRKRDEREKY) is disordered. In terms of domain architecture, W2 spans 244–415 (KLHKAQASQE…QSAEEESESE (172 aa)). Phosphoserine occurs at positions 407, 412, and 414.

Belongs to the BZW family. As to expression, expressed in mushroom bodies.

May be involved in memory formation. In Drosophila melanogaster (Fruit fly), this protein is Protein krasavietz (kra).